The sequence spans 652 residues: Sodium-dependent phosphate transporter 1-A (652 aa).

At 1-25 (MESTTLASLAAVSVLAAGAQTDMSD) the chain is on the cytoplasmic side. Residues 26 to 46 (VLWLLILGFVIAFILAFSVGA) traverse the membrane as a helical segment. Topologically, residues 47–66 (NDVANSFGTAVGSGVVTLRQ) are extracellular. A helical transmembrane segment spans residues 67–87 (ACILATIFETVGAMLLGAKVS). Residues 88–104 (ETIRSGIIDVHMYNGSE) are Cytoplasmic-facing. The chain crosses the membrane as a helical span at residues 105–125 (AVLMAGSISAMFGSAVWQLAA). Over 126–162 (SFLKLPISGTHCIVGATIGFSMVARGHQGVKWLELLR) the chain is Extracellular. The helical transmembrane segment at 163–183 (IVASWFLSPLLSGIMSAVLFY) threads the bilayer. Over 184–201 (FVRKFILNKDDPVPNGLR) the chain is Cytoplasmic. A helical membrane pass occupies residues 202–222 (ALPVFYAVTMGINLFSIMFTG). Topologically, residues 223-234 (APMLGFDRIPWW) are extracellular. Residues 235–255 (GTLLISLGCAILTALVVWFIV) traverse the membrane as a helical segment. Over 256–482 (CPRLKKKMQS…IDELEIDKPE (227 aa)) the chain is Cytoplasmic. Residues 278-308 (TQLVEKKPSSNGLMDHHPGPPRNYSPVPQTP) form a disordered region. The segment covering 281 to 295 (VEKKPSSNGLMDHHP) has biased composition (basic and acidic residues). Positions 297 to 308 (PPRNYSPVPQTP) are enriched in pro residues. The helical transmembrane segment at 483 to 503 (VSTLFQFLQILTACFGSFAHG) threads the bilayer. Residues 504–531 (GNDVSNAIGPLVALWLIYDSASVAPSAP) lie on the Extracellular side of the membrane. Residues 532-552 (TPIWLLLYGGVGICTGLWIWG) traverse the membrane as a helical segment. Residues 553–571 (RRVIQTMGKDLTPITPSSG) are Cytoplasmic-facing. Residues 572-592 (FSIELASAITVVVASNIGLPV) form a helical membrane-spanning segment. At 593 to 621 (STTHCKVGSVVSVGWLRSRKAVDWHLFRN) the chain is on the extracellular side. Residues 622–642 (IFIAWFVTVPISGLISAAIMA) form a helical membrane-spanning segment. Topologically, residues 643-652 (LFYYVILPLT) are cytoplasmic.

It belongs to the inorganic phosphate transporter (PiT) (TC 2.A.20) family.

It localises to the membrane. Sodium-phosphate symporter which plays a fundamental housekeeping role in phosphate transport. The polypeptide is Sodium-dependent phosphate transporter 1-A (slc20a1a) (Danio rerio (Zebrafish)).